The sequence spans 336 residues: Tryptophan--tRNA ligase (336 aa).

ATP contacts are provided by residues 15-17 (QPT) and 24-25 (GN). The short motif at 16–25 (PTSDSLHLGN) is the 'HIGH' region element. D141 contacts L-tryptophan. ATP contacts are provided by residues 153 to 155 (GED), I192, and 201 to 205 (KMSKS). A 'KMSKS' region motif is present at residues 201-205 (KMSKS).

It belongs to the class-I aminoacyl-tRNA synthetase family. In terms of assembly, homodimer.

It localises to the cytoplasm. It carries out the reaction tRNA(Trp) + L-tryptophan + ATP = L-tryptophyl-tRNA(Trp) + AMP + diphosphate + H(+). Its function is as follows. Catalyzes the attachment of tryptophan to tRNA(Trp). The protein is Tryptophan--tRNA ligase of Mycobacterium tuberculosis (strain CDC 1551 / Oshkosh).